Consider the following 53-residue polypeptide: Metallothionein (53 aa).

Residues 1–6 (MRVIRM) constitute a propeptide that is removed on maturation. Residues Cys17, His19, Cys22, Cys24, Cys32, His33, Cys34, Cys43, and Cys45 each contribute to the Cu(+) site.

This sequence belongs to the metallothionein superfamily.

In terms of biological role, metallothioneins are small proteins that have a high content of cysteine residues which allow them to bind heavy metal ions through clusters of thiolate bonds. MymT binds up to seven ions of Cu(+), with a preference for four to six Cu(+) ions, in a solvent-shielded core. MymT protects M.tuberculosis from copper toxicity. The sequence is that of Metallothionein (mymT) from Mycobacterium tuberculosis (strain CDC 1551 / Oshkosh).